The primary structure comprises 189 residues: UPF0301 protein RP032 (189 aa).

Belongs to the UPF0301 (AlgH) family.

This Rickettsia prowazekii (strain Madrid E) protein is UPF0301 protein RP032.